The primary structure comprises 486 residues: Hydrogenobyrinate a,c-diamide synthase (486 aa).

Over residues 254–272 the composition is skewed to pro residues; it reads SPPPPLPVPSPGAAPPDPL. The tract at residues 254–284 is disordered; that stretch reads SPPPPLPVPSPGAAPPDPLVRPGRPRPQAPD. Residues 289 to 474 enclose the GATase cobBQ-type domain; it reads RVAMASGAAF…LHTHWAAEPG (186 aa). Catalysis depends on C372, which acts as the Nucleophile.

Belongs to the CobB/CbiA family. Mg(2+) is required as a cofactor.

The catalysed reaction is hydrogenobyrinate + 2 L-glutamine + 2 ATP + 2 H2O = hydrogenobyrinate a,c-diamide + 2 L-glutamate + 2 ADP + 2 phosphate + 2 H(+). It participates in cofactor biosynthesis; adenosylcobalamin biosynthesis; cob(II)yrinate a,c-diamide from precorrin-2 (aerobic route): step 9/10. In terms of biological role, catalyzes the ATP-dependent amidation of the two carboxylate groups at positions a and c of hydrogenobyrinate, using either L-glutamine or ammonia as the nitrogen source. The protein is Hydrogenobyrinate a,c-diamide synthase of Streptomyces coelicolor (strain ATCC BAA-471 / A3(2) / M145).